The chain runs to 246 residues: U2 small nuclear ribonucleoprotein A' (246 aa).

LRR repeat units lie at residues 19-40, 42-63, 64-85, and 88-109; these read RDRE…GVTR, QNDA…PLLQ, QLKT…IGHS, and ALHS…VHLS. The 39-residue stretch at 122-160 folds into the LRRCT domain; the sequence is TPASREAQYREFVIWKLPQVRVLDYQRIKDKERARAKDL.

The protein belongs to the U2 small nuclear ribonucleoprotein A family. In terms of assembly, associated with the spliceosome.

The protein localises to the nucleus. In terms of biological role, involved in pre-mRNA splicing. This is U2 small nuclear ribonucleoprotein A' (LEA1) from Mycosarcoma maydis (Corn smut fungus).